We begin with the raw amino-acid sequence, 97 residues long: Cytochrome c oxidase subunit 4 isoform 1, mitochondrial (97 aa).

Residues 1 to 22 (MLATRVFNLIGRRAISTSVCVR) constitute a mitochondrion transit peptide. Position 29 is an N6-acetyllysine; alternate (Lys-29). Lys-29 is modified (N6-succinyllysine; alternate). Lys-53 bears the N6-acetyllysine mark. Phosphoserine occurs at positions 56 and 58. Lys-60 carries the post-translational modification N6-acetyllysine; alternate. The residue at position 60 (Lys-60) is an N6-succinyllysine; alternate. At Lys-67 the chain carries N6-acetyllysine.

Belongs to the cytochrome c oxidase IV family. Component of the cytochrome c oxidase (complex IV, CIV), a multisubunit enzyme composed of 14 subunits. The complex is composed of a catalytic core of 3 subunits MT-CO1, MT-CO2 and MT-CO3, encoded in the mitochondrial DNA, and 11 supernumerary subunits COX4I, COX5A, COX5B, COX6A, COX6B, COX6C, COX7A, COX7B, COX7C, COX8 and NDUFA4, which are encoded in the nuclear genome. The complex exists as a monomer or a dimer and forms supercomplexes (SCs) in the inner mitochondrial membrane with NADH-ubiquinone oxidoreductase (complex I, CI) and ubiquinol-cytochrome c oxidoreductase (cytochrome b-c1 complex, complex III, CIII), resulting in different assemblies (supercomplex SCI(1)III(2)IV(1) and megacomplex MCI(2)III(2)IV(2)). Interacts with PHB2; the interaction decreases in absence of SPHK2. Interacts with AFG1L. Interacts with ABCB7; this interaction allows the regulation of cellular iron homeostasis and cellular reactive oxygen species (ROS) levels in cardiomyocytes. Interacts with FLVCR2; this interaction occurs in the absence of heme and is disrupted upon heme binding. Interacts with IRGC.

Its subcellular location is the mitochondrion inner membrane. It functions in the pathway energy metabolism; oxidative phosphorylation. In terms of biological role, component of the cytochrome c oxidase, the last enzyme in the mitochondrial electron transport chain which drives oxidative phosphorylation. The respiratory chain contains 3 multisubunit complexes succinate dehydrogenase (complex II, CII), ubiquinol-cytochrome c oxidoreductase (cytochrome b-c1 complex, complex III, CIII) and cytochrome c oxidase (complex IV, CIV), that cooperate to transfer electrons derived from NADH and succinate to molecular oxygen, creating an electrochemical gradient over the inner membrane that drives transmembrane transport and the ATP synthase. Cytochrome c oxidase is the component of the respiratory chain that catalyzes the reduction of oxygen to water. Electrons originating from reduced cytochrome c in the intermembrane space (IMS) are transferred via the dinuclear copper A center (CU(A)) of subunit 2 and heme A of subunit 1 to the active site in subunit 1, a binuclear center (BNC) formed by heme A3 and copper B (CU(B)). The BNC reduces molecular oxygen to 2 water molecules using 4 electrons from cytochrome c in the IMS and 4 protons from the mitochondrial matrix. This chain is Cytochrome c oxidase subunit 4 isoform 1, mitochondrial (COX4I1), found in Sus scrofa (Pig).